A 227-amino-acid chain; its full sequence is Floral homeotic protein DEFICIENS (227 aa).

Residues arginine 3–tyrosine 57 enclose the MADS-box domain. In terms of domain architecture, K-box spans tyrosine 84–aspartate 174.

The protein localises to the nucleus. Transcription factor involved in the genetic control of flower development. Acts in conjunction with GLOBOSA (glo). This Antirrhinum majus (Garden snapdragon) protein is Floral homeotic protein DEFICIENS (DEFA).